The following is a 1107-amino-acid chain: Membrane-associated guanylate kinase, WW and PDZ domain-containing protein 3 (1107 aa).

Residues 17-102 form the PDZ 1 domain; that stretch reads ECGLSGVGGD…PIRLKTVKPG (86 aa). Positions 110-284 constitute a Guanylate kinase-like domain; the sequence is RHYLSLQFQK…SMDFRNYLTR (175 aa). 117 to 124 contributes to the ATP binding site; the sequence is FQKGSIDH. A disordered region spans residues 210–277; it reads FDTETQRKRT…SYNQTNSSMD (68 aa). Residues 220–231 are compositionally biased toward polar residues; the sequence is TSVSKMQRTDSS. The span at 232 to 241 shows a compositional bias: acidic residues; it reads LPEEEDEEER. Residues 251–261 are compositionally biased toward basic and acidic residues; sequence TDHRDRQEPSE. Residues 267–277 show a composition bias toward polar residues; sequence PSYNQTNSSMD. WW domains follow at residues 289–322 and 335–368; these read EPLPKNWEMAYTEAGMIYFIDHNTKTTTWLDPRL and GELPYGWEKIEDPQYGTYYVDHINQKTQFDNPVL. The segment at 374-398 is disordered; that stretch reads KQLNPAPSEGTVHQEPENSQFTRDP. PDZ domains are found at residues 407–489, 577–653, 727–809, and 853–940; these read HTSL…TLCR, TIPL…LILR, DVFL…TVRR, and DVIL…IAEE. Residues 941–975 are disordered; sequence EHRGPPSGSNSARQSPAPQHRPMGQTQPTYGTLDR. Residues 947 to 957 are compositionally biased toward polar residues; it reads SGSNSARQSPA. A PDZ 6 domain is found at 1003–1085; the sequence is PVELERGPRG…KVLLLLRPGT (83 aa).

This sequence belongs to the MAGUK family.

It is found in the cell membrane. It localises to the cell junction. The protein localises to the tight junction. Its function is as follows. Acts as a scaffolding protein at cell-cell junctions, thereby regulating various cellular and signaling processes. This chain is Membrane-associated guanylate kinase, WW and PDZ domain-containing protein 3 (magi3), found in Xenopus tropicalis (Western clawed frog).